A 258-amino-acid polypeptide reads, in one-letter code: MAKLIPTIALVSVLLFIIANASFAYRTTITTIEIDESKGEREGSSSQQCRQEVQRKDLSSCERYLRQSSSRRSPGEEVLRMPGDENQQQESQQLQQCCNQVKQVRDECQCEAIKYIAEDQIQQGQLHGEESERVAQRAGEIVSSCGVRCMRQTRTNPSQQGCRGQIQEQQNLRQCQEYIKQQVSGQGPRRSDNQERSLRGCCDHLKQMQSQCRCEGLRQAIEQQQSQGQLQGQDVFEAFRTAANLPSMCGVSPTECRF.

The first 24 residues, 1–24, serve as a signal peptide directing secretion; sequence MAKLIPTIALVSVLLFIIANASFA. The propeptide occupies 25-35; that stretch reads YRTTITTIEID. Intrachain disulfides connect Cys-49/Cys-108, Cys-61/Cys-97, Cys-98/Cys-145, and Cys-110/Cys-149. Residues 64-87 form a disordered region; sequence YLRQSSSRRSPGEEVLRMPGDENQ. Ser-69 carries the phosphoserine modification. Positions 73 to 83 are enriched in basic and acidic residues; that stretch reads SPGEEVLRMPG. The propeptide occupies 77-86; sequence EVLRMPGDEN. Pyrrolidone carboxylic acid is present on Gln-87. 2 propeptides span residues 154-156 and 191-193; these read RTN and SDN. Disulfide bonds link Cys-162–Cys-212, Cys-175–Cys-201, Cys-202–Cys-249, and Cys-214–Cys-256. Gln-194 is subject to Pyrrolidone carboxylic acid.

Belongs to the 2S seed storage albumins family. In terms of assembly, the 2 mature proteins consist of heterodimers of a small and a large chain; disulfide-linked. The N-terminus of both large chains is blocked. Post-translationally, the C-terminus of the allergen Ric c 1 and allergen Ric c 3 small chains are heterogeneous and the length of the chains can vary from 33 to 36 amino acids and from 36 to 40 amino acids respectively.

Its function is as follows. 2S seed storage proteins. The chain is 2S seed storage albumin protein from Ricinus communis (Castor bean).